We begin with the raw amino-acid sequence, 109 residues long: Class I hydrophobin 2 (109 aa).

The N-terminal stretch at 1–18 (MQFKLAFVSIALATLAVA) is a signal peptide. Intrachain disulfides connect Cys-30–Cys-90, Cys-37–Cys-84, Cys-38–Cys-71, and Cys-91–Cys-104.

Belongs to the fungal hydrophobin family. Self-assembles to form functional amyloid fibrils called rodlets. Self-assembly into fibrillar rodlets occurs spontaneously at hydrophobic:hydrophilic interfaces and the rodlets further associate laterally to form amphipathic monolayers.

Its subcellular location is the secreted. It is found in the cell wall. In terms of biological role, aerial growth, conidiation, and dispersal of filamentous fungi in the environment rely upon a capability of their secreting small amphipathic proteins called hydrophobins (HPBs) with low sequence identity. Class I can self-assemble into an outermost layer of rodlet bundles on aerial cell surfaces, conferring cellular hydrophobicity that supports fungal growth, development and dispersal; whereas Class II form highly ordered films at water-air interfaces through intermolecular interactions but contribute nothing to the rodlet structure. Hyd2 is a class I hydrophobin that may allow the dikaryotic mycelia to attach to the hydrophobic surface of the substrate. Higher expression in dikaryotic mycelia than in monokaryotic mycelia indicates that dikaryons require more hyd2 hydrophobin than the monokaryons, presumably for a higher rate of hyphal growth. The chain is Class I hydrophobin 2 from Lentinula edodes (Shiitake mushroom).